The chain runs to 87 residues: Small ribosomal subunit protein uS17 (87 aa).

This sequence belongs to the universal ribosomal protein uS17 family. In terms of assembly, part of the 30S ribosomal subunit.

One of the primary rRNA binding proteins, it binds specifically to the 5'-end of 16S ribosomal RNA. In Geobacillus stearothermophilus (Bacillus stearothermophilus), this protein is Small ribosomal subunit protein uS17.